The sequence spans 623 residues: Interferon-induced GTP-binding protein Mx3 (623 aa).

Residues 31–304 (DLALPAIAVI…LVHHIEKSLP (274 aa)) form the Dynamin-type G domain. A G1 motif region spans residues 41–48 (GDQSSGKS). Residue 41–48 (GDQSSGKS) participates in GTP binding. The G2 motif stretch occupies residues 66 to 68 (VTR). The segment at 142–145 (DLPG) is G3 motif. Residues 142–146 (DLPGI) and 211–214 (TKPD) contribute to the GTP site. The tract at residues 211-214 (TKPD) is G4 motif. Positions 243 to 246 (KCRG) are G5 motif. A GED domain is found at 537-623 (LQEMMLHLKS…MKARSYLVEF (87 aa)).

It belongs to the TRAFAC class dynamin-like GTPase superfamily. Dynamin/Fzo/YdjA family.

Its subcellular location is the cytoplasm. Does not inhibit strain RB-1 of the fish pathogen, infectious hematopoietic necrosis virus (IHNV). This is Interferon-induced GTP-binding protein Mx3 from Oncorhynchus mykiss (Rainbow trout).